Consider the following 622-residue polypeptide: Protein FAM234B (622 aa).

Residues 1-68 (MATVLSRALK…EPDSDAEVAE (68 aa)) form a disordered region. Serine 16 carries the phosphoserine modification. Residue threonine 26 is modified to Phosphothreonine. 3 positions are modified to phosphoserine: serine 30, serine 33, and serine 62. The helical transmembrane segment at 104–124 (TSVFLLTLGISMILVLLCAFL) threads the bilayer.

The protein belongs to the FAM234 family.

The protein localises to the membrane. It localises to the golgi outpost. The protein resides in the cytoplasm. Its subcellular location is the cytoskeleton. It is found in the microtubule organizing center. In Homo sapiens (Human), this protein is Protein FAM234B.